A 586-amino-acid chain; its full sequence is Probable riboflavin import ATP-binding protein RfuB (586 aa).

ABC transporter domains follow at residues arginine 46–isoleucine 299 and leucine 343–threonine 586. ATP is bound at residue glycine 89 to serine 96.

This sequence belongs to the ABC transporter superfamily. As to quaternary structure, the complex is probably composed of two ATP-binding proteins (RfuB), two transmembrane proteins (RfuC and RfuD) and a solute-binding protein (RfuA).

Its subcellular location is the cell inner membrane. Probably part of the ABC transporter complex RfuABCD involved in riboflavin import. Probably responsible for energy coupling to the transport system. This Treponema pallidum (strain Nichols) protein is Probable riboflavin import ATP-binding protein RfuB.